The following is a 246-amino-acid chain: MEEEEVYIDVNSPVALKVHPSKDLMKFLLSENANLKMASFFTEFEKGFMDIIVGIKIRYKDLSRELLKFVVLNIGNLANEYGKEIRAVFGGLSFKEYLEREKYSYPYSGEKLFQEKISINGTLLLLEVYVKEENYTLICREEGSSNYLIKAIRKVEGPYEALKILEKAKESIKNRDFVSLRKLFSPYEVDFFELYSVFLKGKDTTKLKKLEKEIHELPYMLINGKITYEEYKKRIREIEKEIGLSE.

The stretch at 204 to 243 (TTKLKKLEKEIHELPYMLINGKITYEEYKKRIREIEKEIG) forms a coiled coil.

This is an uncharacterized protein from Aquifex aeolicus (strain VF5).